The following is a 502-amino-acid chain: Protein GIS3 (502 aa).

It localises to the cytoplasm. It is found in the nucleus. In Saccharomyces cerevisiae (strain ATCC 204508 / S288c) (Baker's yeast), this protein is Protein GIS3 (GIS3).